Consider the following 534-residue polypeptide: MSSNKNQSDLNIPTNSASLKQKQRQQLGIKSEIGASTSDVYDPQVASYLSAGDSPSQFANTALHHSNSVSYSASAAAAAAELQHRAELQRRQQQLQQQELQHQQEQLQQYRQAQAQAQAQAQAQAQAQREHQQLQHAYQQQQQLHQLGQLSQQLAQPHLSQHEHVRDALTTDEFDTNEDLRSRYIENEIVKTFNSKAELVHFVKNELGPEERCKIVINSSKPKAVYFQCERSGSFRTTVKDATKRQRIAYTKRNKCAYRLVANLYPNEKDQKRKNKPDEPGHNEENSRISEMWVLRMINPQHNHAPDPINKKKRQKTSRTLVEKPINKPHHHHLLQQEQQQQQQQQQQQQQQQQQQQQQQHNANSQAQQQAAQLQQQMQQQLQASGLPTTPNYSELLGQLGQLSQQQSQQQQLHHIPQQRQRTQSQQSQQQPQQTPHGLDQPDAAVIAAIEASAAAAVASQGSPNVTAAAVAALQHTQGNEHDAQQQQDRGGNNGGAIDSNVDPSLDPNVDPNVQAHDHSHGLRNSYGKRSGFL.

A disordered region spans residues 1-36 (MSSNKNQSDLNIPTNSASLKQKQRQQLGIKSEIGAS). Residues 77 to 147 (AAAAELQHRA…YQQQQQLHQL (71 aa)) are a coiled coil. Disordered regions lie at residues 262-285 (ANLY…HNEE), 353-372 (QQQQ…QQAA), 402-439 (QLSQ…PHGL), and 477-534 (TQGN…SGFL). Residues 267–285 (NEKDQKRKNKPDEPGHNEE) show a composition bias toward basic and acidic residues. The stretch at 332 to 386 (HHLLQQEQQQQQQQQQQQQQQQQQQQQQQHNANSQAQQQAAQLQQQMQQQLQASG) forms a coiled coil. Positions 402–435 (QLSQQQSQQQQLHHIPQQRQRTQSQQSQQQPQQT) are enriched in low complexity.

This sequence belongs to the RBF1 family.

The protein localises to the nucleus. The protein resides in the chromosome. Its subcellular location is the telomere. Functionally, transcriptional activator that binds to the RPG box and to telomeres. Involved in the regulation of the transition between yeast and filamentous forms and plays a role in virulence. Induces expression of HWP1, a major hyphal cell protein and virulence factor. This chain is Transcription factor RBF1 (RBF1), found in Candida albicans (strain SC5314 / ATCC MYA-2876) (Yeast).